A 782-amino-acid polypeptide reads, in one-letter code: Calcium-independent phospholipase A2-gamma (782 aa).

N-linked (GlcNAc...) asparagine glycosylation is present at Asn-4. Disordered stretches follow at residues 219–275 and 317–343; these read EKMS…PSAI and SKSQ…AEEK. Residues 220 to 248 show a composition bias toward basic and acidic residues; that stretch reads KMSQQKENEHFRDKSELEDKKVEEGKLRS. N-linked (GlcNAc...) asparagine glycosylation occurs at Asn-361. The 196-residue stretch at 445–640 folds into the PNPLA domain; sequence LSIDGGGTRG…LLNNPSALAM (196 aa). A GXGXXG motif is present at residues 449–454; it reads GGGTRG. Residues 475-495 form a helical membrane-spanning segment; the sequence is LFDYICGVSTGAILAFMLGLF. Residues 481–485 carry the GXSXG motif; that stretch reads GVSTG. The active-site Nucleophile is Ser-483. Asp-627 (proton acceptor) is an active-site residue. Positions 627-629 match the DGA/G motif; that stretch reads DGG. Lys-736 is subject to N6-succinyllysine.

Expressed in parenchymal tissues including heart, skeletal muscle, placenta, brain, liver and pancreas. Also expressed in bronchial epithelial cells and kidney. Highest expression is observed in skeletal muscle and heart.

It is found in the endoplasmic reticulum membrane. Its subcellular location is the mitochondrion membrane. The protein localises to the peroxisome membrane. It catalyses the reaction a 1,2-diacyl-sn-glycero-3-phosphocholine + H2O = a 1-acyl-sn-glycero-3-phosphocholine + a fatty acid + H(+). It carries out the reaction a 1,2-diacyl-sn-glycero-3-phosphocholine + H2O = a 2-acyl-sn-glycero-3-phosphocholine + a fatty acid + H(+). The enzyme catalyses a 1,2-diacyl-sn-glycero-3-phosphoethanolamine + H2O = a 1-acyl-sn-glycero-3-phosphoethanolamine + a fatty acid + H(+). The catalysed reaction is a 1-O-(1Z-alkenyl)-2-acyl-sn-glycero-3-phosphocholine + H2O = a 1-O-(1Z-alkenyl)-sn-glycero-3-phosphocholine + a fatty acid + H(+). It catalyses the reaction a 1-acyl-sn-glycero-3-phosphocholine + H2O = sn-glycerol 3-phosphocholine + a fatty acid + H(+). It carries out the reaction 1-acyl-2-(9Z,12Z)-octadecadienoyl-sn-glycero-3-phosphocholine + H2O = a 1-acyl-sn-glycero-3-phosphocholine + (9Z,12Z)-octadecadienoate + H(+). The enzyme catalyses 1-acyl-2-(5Z,8Z,11Z,14Z-eicosatetraenoyl)-sn-glycero-3-phosphocholine + H2O = a 1-acyl-sn-glycero-3-phosphocholine + (5Z,8Z,11Z,14Z)-eicosatetraenoate + H(+). The catalysed reaction is 1-hexadecanoyl-2-(5Z,8Z,11Z,14Z-eicosatetraenoyl)-sn-glycero-3-phosphocholine + H2O = 1-hexadecanoyl-sn-glycero-3-phosphocholine + (5Z,8Z,11Z,14Z)-eicosatetraenoate + H(+). It catalyses the reaction 1-octadecanoyl-2-(9Z-octadecenoyl)-sn-glycero-3-phosphocholine + H2O = 1-octadecanoyl-sn-glycero-3-phosphocholine + (9Z)-octadecenoate + H(+). It carries out the reaction 1-hexadecanoyl-2-(9Z-octadecenoyl)-sn-glycero-3-phosphocholine + H2O = 1-hexadecanoyl-sn-glycero-3-phosphocholine + (9Z)-octadecenoate + H(+). The enzyme catalyses 1-hexadecanoyl-2-(9Z,12Z-octadecadienoyl)-sn-glycero-3-phosphocholine + H2O = (9Z,12Z)-octadecadienoate + 1-hexadecanoyl-sn-glycero-3-phosphocholine + H(+). The catalysed reaction is 1-acyl-2-(9Z,12Z)-octadecadienoyl-sn-glycero-3-phosphoethanolamine + H2O = a 1-acyl-sn-glycero-3-phosphoethanolamine + (9Z,12Z)-octadecadienoate + H(+). It catalyses the reaction 1-acyl-2-(5Z,8Z,11Z,14Z)-eicosatetraenoyl-sn-glycero-3-phosphoethanolamine + H2O = a 1-acyl-sn-glycero-3-phosphoethanolamine + (5Z,8Z,11Z,14Z)-eicosatetraenoate + H(+). It carries out the reaction 1-hexadecanoyl-2-(5Z,8Z,11Z,14Z-eicosatetraenoyl)-sn-glycero-3-phosphoethanolamine + H2O = 1-hexadecanoyl-sn-glycero-3-phosphoethanolamine + (5Z,8Z,11Z,14Z)-eicosatetraenoate + H(+). The enzyme catalyses 1-hexadecanoyl-2-(5Z,8Z,11Z,14Z-eicosatetraenoyl)-sn-glycero-3-phosphocholine + H2O = 2-(5Z,8Z,11Z,14Z)-eicosatetraenoyl-sn-glycero-3-phosphocholine + hexadecanoate + H(+). The catalysed reaction is 1-octadecanoyl-2-(9Z-octadecenoyl)-sn-glycero-3-phosphocholine + H2O = 2-(9Z-octadecenoyl)-sn-glycero-3-phosphocholine + octadecanoate + H(+). It catalyses the reaction 1-hexadecanoyl-2-(4Z,7Z,10Z,13Z,16Z,19Z-docosahexaenoyl)-sn-glycero-3-phosphocholine + H2O = 2-(4Z,7Z,10Z,13Z,16Z,19Z-docosahexaenoyl)-sn-glycero-3-phosphocholine + hexadecanoate + H(+). It carries out the reaction 1-O-(1Z)-hexadecenyl-2 (5Z,8Z,11Z,14Z)-eicosatetraenoyl-sn-glycero-3-phosphocholine + H2O = 1-(1Z-hexadecenyl)-sn-glycero-3-phosphocholine + (5Z,8Z,11Z,14Z)-eicosatetraenoate + H(+). The enzyme catalyses 1-O-(1Z-hexadecenyl)-2-(9Z-octadecenoyl)-sn-glycero-3-phosphocholine + H2O = 1-(1Z-hexadecenyl)-sn-glycero-3-phosphocholine + (9Z)-octadecenoate + H(+). The catalysed reaction is 1-hexadecanoyl-sn-glycero-3-phosphocholine + H2O = sn-glycerol 3-phosphocholine + hexadecanoate + H(+). It catalyses the reaction 1',3'-bis-[1,2-di-(9Z,12Z-octadecadienoyl)-sn-glycero-3-phospho]-glycerol + H2O = 1'-[1,2-di-(9Z,12Z-octadecadienoyl)-sn-glycero-3-phospho]-3'-[1-(9Z,12Z-octadecadienoyl)-sn-glycero-3-phospho]-glycerol + (9Z,12Z)-octadecadienoate + H(+). It carries out the reaction 1'-[1-acyl-2-(9-hydroxy-(10E,12Z)-octadecadienoyl)-sn-glycero-3-phospho]-3'-[1,2-diacyl-sn-glycero-3-phospho]-glycerol + H2O = 9-hydroxy-(10E,12Z)-octadecadienoate + 1'-[1,2-diacyl-sn-glycero-3-phospho],3'-[1-acyl-sn-glycero-3-phospho]-glycerol + H(+). It functions in the pathway phospholipid metabolism. With respect to regulation, calcium-independent phospholipase. Inhibited by (E)-6-bromomethylene-3-1-naphthalenyl-2H-tetrahydropyran-2-one (BEL). The activity toward 1-hexadecanoyl-2-(5Z,8Z,11Z,14Z-eicosatetraenoyl)-sn-glycero-3-phosphocholine is stimulated by cardiolipin. In terms of biological role, calcium-independent and membrane-bound phospholipase, that catalyzes the esterolytic cleavage of fatty acids from glycerophospholipids to yield free fatty acids and lysophospholipids, hence regulating membrane physical properties and the release of lipid second messengers and growth factors. Hydrolyzes phosphatidylethanolamine, phosphatidylcholine and probably phosphatidylinositol with a possible preference for the former. Also has a broad substrate specificity in terms of fatty acid moieties, hydrolyzing saturated and mono-unsaturated fatty acids at nearly equal rates from either the sn-1 or sn-2 position in diacyl phosphatidylcholine. However, has a weak activity toward polyunsaturated fatty acids at the sn-2 position, and thereby favors the production of 2-arachidonoyl lysophosphatidylcholine, a key branch point metabolite in eicosanoid signaling. On the other hand, can produce arachidonic acid from the sn-1 position of diacyl phospholipid and from the sn-2 position of arachidonate-containing plasmalogen substrates. Therefore, plays an important role in the mobilization of arachidonic acid in response to cellular stimuli and the generation of lipid second messengers. Can also hydrolyze lysophosphatidylcholine. In the mitochondrial compartment, catalyzes the hydrolysis and release of oxidized aliphatic chains from cardiolipin and integrates mitochondrial bioenergetics and signaling. It is essential for maintaining efficient bioenergetic mitochondrial function through tailoring mitochondrial membrane lipid metabolism and composition. This chain is Calcium-independent phospholipase A2-gamma, found in Homo sapiens (Human).